We begin with the raw amino-acid sequence, 183 residues long: Protein Syd (183 aa).

The protein belongs to the Syd family.

It is found in the cell inner membrane. Its function is as follows. Interacts with the SecY protein in vivo. May bind preferentially to an uncomplexed state of SecY, thus functioning either as a chelating agent for excess SecY in the cell or as a regulatory factor that negatively controls the translocase function. The sequence is that of Protein Syd from Yersinia enterocolitica serotype O:8 / biotype 1B (strain NCTC 13174 / 8081).